An 89-amino-acid polypeptide reads, in one-letter code: Small ribosomal subunit protein uS15 (89 aa).

It belongs to the universal ribosomal protein uS15 family. In terms of assembly, part of the 30S ribosomal subunit. Forms a bridge to the 50S subunit in the 70S ribosome, contacting the 23S rRNA.

One of the primary rRNA binding proteins, it binds directly to 16S rRNA where it helps nucleate assembly of the platform of the 30S subunit by binding and bridging several RNA helices of the 16S rRNA. Its function is as follows. Forms an intersubunit bridge (bridge B4) with the 23S rRNA of the 50S subunit in the ribosome. In Orientia tsutsugamushi (strain Boryong) (Rickettsia tsutsugamushi), this protein is Small ribosomal subunit protein uS15.